Here is a 485-residue protein sequence, read N- to C-terminus: Glutamyl-tRNA(Gln) amidotransferase subunit A (485 aa).

Active-site charge relay system residues include Lys-78 and Ser-153. The active-site Acyl-ester intermediate is the Ser-177.

It belongs to the amidase family. GatA subfamily. Heterotrimer of A, B and C subunits.

It catalyses the reaction L-glutamyl-tRNA(Gln) + L-glutamine + ATP + H2O = L-glutaminyl-tRNA(Gln) + L-glutamate + ADP + phosphate + H(+). In terms of biological role, allows the formation of correctly charged Gln-tRNA(Gln) through the transamidation of misacylated Glu-tRNA(Gln) in organisms which lack glutaminyl-tRNA synthetase. The reaction takes place in the presence of glutamine and ATP through an activated gamma-phospho-Glu-tRNA(Gln). This Bacillus cereus (strain ATCC 14579 / DSM 31 / CCUG 7414 / JCM 2152 / NBRC 15305 / NCIMB 9373 / NCTC 2599 / NRRL B-3711) protein is Glutamyl-tRNA(Gln) amidotransferase subunit A.